The following is a 326-amino-acid chain: Phenylalanine--tRNA ligase alpha subunit (326 aa).

A Mg(2+)-binding site is contributed by E251.

The protein belongs to the class-II aminoacyl-tRNA synthetase family. Phe-tRNA synthetase alpha subunit type 1 subfamily. Tetramer of two alpha and two beta subunits. Requires Mg(2+) as cofactor.

The protein resides in the cytoplasm. The enzyme catalyses tRNA(Phe) + L-phenylalanine + ATP = L-phenylalanyl-tRNA(Phe) + AMP + diphosphate + H(+). In Idiomarina loihiensis (strain ATCC BAA-735 / DSM 15497 / L2-TR), this protein is Phenylalanine--tRNA ligase alpha subunit.